Consider the following 207-residue polypeptide: Large ribosomal subunit protein uL4 (207 aa).

The segment at 48-87 is disordered; the sequence is THAVKNRSAVSGGGKKPWRQKGTGRARQGSIRSPQFRGGG.

It belongs to the universal ribosomal protein uL4 family. Part of the 50S ribosomal subunit.

Its function is as follows. One of the primary rRNA binding proteins, this protein initially binds near the 5'-end of the 23S rRNA. It is important during the early stages of 50S assembly. It makes multiple contacts with different domains of the 23S rRNA in the assembled 50S subunit and ribosome. In terms of biological role, forms part of the polypeptide exit tunnel. This chain is Large ribosomal subunit protein uL4, found in Limosilactobacillus reuteri subsp. reuteri (strain JCM 1112) (Lactobacillus reuteri).